A 556-amino-acid chain; its full sequence is Single-strand DNA-binding protein (556 aa).

Disordered stretches follow at residues 1–95 and 527–556; these read MDPK…SEVE and FVRP…VNSL. Composition is skewed to polar residues over residues 10–25 and 36–51; these read ENIT…TSDF and VNST…GSQE. Composition is skewed to basic and acidic residues over residues 52–73 and 539–548; these read TPEH…RLDA and DSRRTYESRP.

Interacts with host VIP2 that promotes T-DNA integration into the host genome. Forms a complex made of virE2 and host proteins VIP1 and VBF. Forms heterodimers with the chaperone protein virE1 that prevent virE2 anarchic homopolymerization. Interacts with A.thaliana VIP1 that mediates its translocation to the host nucleus. Forms a complex made of VirE2, host VIP1 and VIP2 and single-stranded DNA (ssDNA).

Its subcellular location is the secreted. It localises to the host nucleus. Functionally, involved in DNA transformation; mediates the nuclear uptake of single-stranded DNA copies of the transferred DNA (T-DNA) element. Binds single-stranded but not double-stranded DNA regardless of nucleotide sequence composition. This is Single-strand DNA-binding protein (virE2) from Agrobacterium fabrum (strain C58 / ATCC 33970) (Agrobacterium tumefaciens (strain C58)).